The sequence spans 452 residues: Exodeoxyribonuclease 7 large subunit (452 aa).

It belongs to the XseA family. In terms of assembly, heterooligomer composed of large and small subunits.

The protein resides in the cytoplasm. It catalyses the reaction Exonucleolytic cleavage in either 5'- to 3'- or 3'- to 5'-direction to yield nucleoside 5'-phosphates.. Its function is as follows. Bidirectionally degrades single-stranded DNA into large acid-insoluble oligonucleotides, which are then degraded further into small acid-soluble oligonucleotides. The protein is Exodeoxyribonuclease 7 large subunit of Lysinibacillus sphaericus (strain C3-41).